We begin with the raw amino-acid sequence, 286 residues long: Glycine--tRNA ligase alpha subunit (286 aa).

This sequence belongs to the class-II aminoacyl-tRNA synthetase family. In terms of assembly, tetramer of two alpha and two beta subunits.

Its subcellular location is the cytoplasm. The enzyme catalyses tRNA(Gly) + glycine + ATP = glycyl-tRNA(Gly) + AMP + diphosphate. The sequence is that of Glycine--tRNA ligase alpha subunit from Thermotoga sp. (strain RQ2).